A 20-amino-acid chain; its full sequence is Unknown protein NF003 from 2D-PAGE (20 aa).

This is Unknown protein NF003 from 2D-PAGE from Naegleria fowleri (Brain eating amoeba).